The following is a 129-amino-acid chain: Succinate dehydrogenase subunit 3-1, mitochondrial (129 aa).

Residues 1 to 58 (MEKYHSNSRFAPFRDAPFALRGALGSSGSSFSSIDSLRRSSTLEQARGYTSRPLGAVR) constitute a mitochondrion transit peptide. Over residues 25–35 (GSSGSSFSSID) the composition is skewed to low complexity. The interval 25–80 (GSSGSSFSSIDSLRRSSTLEQARGYTSRPLGAVRPKMLPSGCRPLHTSHPLSAPVA) is disordered. Residue H87 participates in heme binding. A helical membrane pass occupies residues 105-127 (IFGAALGAAIISIPLATKFSLMF).

In terms of assembly, component of complex II composed of eight subunits in plants: four classical SDH subunits SDH1, SDH2, SDH3 and SDH4 (a flavoprotein (FP), an iron-sulfur protein (IP), and a cytochrome b composed of a large and a small subunit.), as well as four subunits unknown in mitochondria from bacteria and heterotrophic eukaryotes. Heme serves as cofactor.

The protein resides in the mitochondrion inner membrane. Its pathway is carbohydrate metabolism; tricarboxylic acid cycle. Functionally, membrane-anchoring subunit of succinate dehydrogenase (SDH). This is Succinate dehydrogenase subunit 3-1, mitochondrial from Oryza sativa subsp. japonica (Rice).